We begin with the raw amino-acid sequence, 1224 residues long: Integrin alpha pat-2 (1224 aa).

The N-terminal stretch at 1 to 27 (MREGSFPRRTRLLCLLAAVVLISTVTS) is a signal peptide. At 28–1153 (FNIDTKNVVL…ASEEGRDLPW (1126 aa)) the chain is on the extracellular side. 7 FG-GAP repeats span residues 29 to 96 (NIDT…TCRE), 110 to 173 (NGSH…KTEE), 180 to 235 (EPAR…TDRP), 236 to 292 (NTEY…MMIN), 293 to 347 (LTDE…KPQY), 364 to 423 (GKQL…GVRE), and 427 to 490 (QKIE…PESA). 4 N-linked (GlcNAc...) asparagine glycosylation sites follow: N74, N110, N230, and N292. N-linked (GlcNAc...) asparagine glycosylation is present at N610. The Cell attachment site motif lies at 622–624 (RGD). 3 N-linked (GlcNAc...) asparagine glycosylation sites follow: N681, N775, and N819. Disordered stretches follow at residues 898-968 (LRIT…QNTG) and 981-1037 (DYEY…KARF). Over residues 920–931 (REEDDESYEDET) the composition is skewed to acidic residues. Basic and acidic residues predominate over residues 955–964 (VYERDEDKIR). Residues 984 to 1003 (YIPDDQEYDGDDFEDDDEDF) show a composition bias toward acidic residues. Basic residues predominate over residues 1008-1023 (SKRVKRAPVPKKKKKE). Residues 1024–1037 (GSRSGEPRSDKARF) show a composition bias toward basic and acidic residues. The chain crosses the membrane as a helical span at residues 1154-1174 (WLYLLAILIGLAILILLILLL). At 1175-1224 (WRCGFFKRNRPPTEHAELRAEKQPAAHYADTQSRYAPQDQYSQGRHGQML) the chain is on the cytoplasmic side. The tract at residues 1190–1224 (AELRAEKQPAAHYADTQSRYAPQDQYSQGRHGQML) is disordered. Residues 1204–1224 (DTQSRYAPQDQYSQGRHGQML) are compositionally biased toward polar residues.

It belongs to the integrin alpha chain family. In terms of assembly, heterodimer of an alpha and a beta subunit. Alpha pat-2 associates with beta pat-3.

The protein resides in the membrane. In terms of biological role, required for muscle development probably through the regulation of the actin-myosin cytoskeleton. During the formation of neuromuscular junctions at the larval stage, negatively regulates membrane protrusion from body wall muscles, probably through lamins such as epi-1, lam-2 and unc-52. Required for distal tip cell migration and dorsal pathfinding. Required for egg-laying. May play a role in cell motility and cell-cell interactions. This Caenorhabditis briggsae protein is Integrin alpha pat-2.